The primary structure comprises 327 residues: Phenylalanine--tRNA ligase alpha subunit (327 aa).

Residue E252 participates in Mg(2+) binding.

Belongs to the class-II aminoacyl-tRNA synthetase family. Phe-tRNA synthetase alpha subunit type 1 subfamily. In terms of assembly, tetramer of two alpha and two beta subunits. Mg(2+) serves as cofactor.

It is found in the cytoplasm. The enzyme catalyses tRNA(Phe) + L-phenylalanine + ATP = L-phenylalanyl-tRNA(Phe) + AMP + diphosphate + H(+). This chain is Phenylalanine--tRNA ligase alpha subunit, found in Vibrio vulnificus (strain CMCP6).